The primary structure comprises 1613 residues: MRSIIIASLVALALASSPAFERTFEPKTDYHYKFDGLVLSGLPSASSELSQSRISARARIQAVDDRYIHLQLVNIRMAASHLPESEQMPSLNSMEQRELSEEYKQMLELPLRAQLRNGLISELQFDKEDAEWSKNMKRAVVNMISFNPIAPRNEIEKIESSYDKEEQSEENTSFFTNEKTLEGDCQVAYTVIREQKKTIITKSINFDKCTERSEIAYGLRYSSECPECEKDTELIRPQTVYTYVLENEELKESEVRSLYTVNVNGQEVMKTETRSKLVLEENHSIKSHIKKVNGEKESIIYSSRWEQLVEDFFKNGDKAEFAPFEKFPLDKKMHLIKTITEQIQEVENNMPETSHFLARLVRIFRTTSTSQLKEIHETLYVKADKKIQSLMEHALAIAGTKNTIQHILVHMENEDILPLGQILKTIQETPFPSQSIAEALIKFAESRVAKNNLVVRQAAWLAAGSVVRGIVDYKNIRPLVREDKRELKEKFLRVFMQQYKDAETTYEKILALKTIGNAGLDISVNQLNEIIVDKRQPLPVRKEAIDALRLLKDTMPRKIQKVLLPIYKNRQYEPEIRMLALWRMMHTRPEESLLVQVVSQMEKETNQQVAALTHQMIRHFAMSTNPCYQRVAIVCSKVLSFTRYQPQEQMIASSYAQLPLFLQNSFSGAQFDFAAIFEKNSFLPKDLHASLDAVFGGNWNKYFAQIGFSQQHMDKYVQMALEKLESLEKESTTVVRGRRIQTGIKLLKELAQKMNIRARPATYTEKDAFAMVYLRYKDMDYAFLPIDRQLVENLIEKFTSNGKVQFSEIRRLLNQELEFETHHAAYFYEAIRKFPTTLGLPLTISGKIPTVISAEGQFSLELEGTELRLTVEARPSVAATHVYEMRMFTPLFEQGVKSVQSVRAYTPIKIQAVAGMKRNFEIVYKVVVPENQKSIVSLTTRPVVFLRFPGFSKFEYIEAEERTVVVPQWQQKTQEIEKVFNFLGLEVSTRGNILNQHTLENWLLAEQDFEVSVENKNRPAEFTARLTVGQLEKTELSQIKYNKIFEKEFELEQENTESRREYFNKMVKNIQKEQGYKSVISLKLEAPRDYTMNTELTTVCDKQVRMCQWEVEIRRSPILEETKEWTLRSQLLVVRPEMPSSLRQLRDQPHREVQLSLTSTWGSQKKSEVTVNAQLQQSKEQKKYERNMDRQFNGMPEYELLIKAARLNQINAVAEYKLTRETEQVLARYFDLVKTYNYWTVSSRPENNENDRVVVQLTVEPMSRQYVNITMQSPMERIELKNVQVPRVYLPSIAQRSVKHQLTEASGSVCKVQKNQIRTFDDVLYNTPLTTCYSLIAKDCSEEPTFAVLSKKTEKNSEEMIIKVIRGEQEIVAQLQNEEIRVKVDGKKIQSEDYSAYQIERLGESAIVIELPEGEVRFDGYTIKTQLPSYSRKNQLCGLCGNNDDESTNEFYTSDNTETEDIEEFHRSYLLKNEECEAEEERLSEKKNYRKYERDEEQSDEYSSEETYDYEQENTKKSQKNQRSQKKSDLVEKTQIKEFSHRICFSVEPVAECRRGYEVEQQQQRKIRFTCLQRHNRDASRLLKESRQQPLQLDDYPVSFVESVKVPTACVAY.

Positions 1–15 (MRSIIIASLVALALA) are cleaved as a signal peptide. The region spanning 24 to 687 (FEPKTDYHYK…EKNSFLPKDL (664 aa)) is the Vitellogenin domain. Residue asparagine 1268 is glycosylated (N-linked (GlcNAc...) asparagine). The VWFD domain maps to 1308–1477 (SVCKVQKNQI…SYLLKNEECE (170 aa)). 2 cysteine pairs are disulfide-bonded: cysteine 1310-cysteine 1440 and cysteine 1332-cysteine 1476. Residues 1491 to 1531 (KYERDEEQSDEYSSEETYDYEQENTKKSQKNQRSQKKSDLV) form a disordered region. Positions 1495–1512 (DEEQSDEYSSEETYDYEQ) are enriched in acidic residues.

In terms of tissue distribution, expressed in the intestine of adult hermaphrodites.

It is found in the secreted. Its function is as follows. Precursor of the egg-yolk proteins that are sources of nutrients during embryonic development. Together with other vitellogenins, may play a role in modulating life-span, acting via induction of autophagy and lysosomal lipolysis. This Caenorhabditis elegans protein is Vitellogenin-2 (vit-2).